The primary structure comprises 609 residues: Threonine--tRNA ligase (609 aa).

The segment at 1–143 is editing domain; the sequence is MRVLYIHAER…SFKPEGAKVE (143 aa). Catalytic regions lie at residues 195–491 and 196–491; these read PRYL…PRLP and RYLD…PRLP. 3 residues coordinate Zn(2+): Cys288, His339, and His460.

The protein belongs to the class-II aminoacyl-tRNA synthetase family. In terms of assembly, homodimer. Zn(2+) serves as cofactor.

The protein resides in the cytoplasm. The enzyme catalyses tRNA(Thr) + L-threonine + ATP = L-threonyl-tRNA(Thr) + AMP + diphosphate + H(+). In terms of biological role, catalyzes the attachment of threonine to tRNA(Thr) in a two-step reaction: L-threonine is first activated by ATP to form Thr-AMP and then transferred to the acceptor end of tRNA(Thr). Also edits incorrectly charged L-seryl-tRNA(Thr). The sequence is that of Threonine--tRNA ligase from Pyrobaculum islandicum (strain DSM 4184 / JCM 9189 / GEO3).